Consider the following 248-residue polypeptide: 3-deoxy-manno-octulosonate cytidylyltransferase (248 aa).

Belongs to the KdsB family.

The protein localises to the cytoplasm. It carries out the reaction 3-deoxy-alpha-D-manno-oct-2-ulosonate + CTP = CMP-3-deoxy-beta-D-manno-octulosonate + diphosphate. It participates in nucleotide-sugar biosynthesis; CMP-3-deoxy-D-manno-octulosonate biosynthesis; CMP-3-deoxy-D-manno-octulosonate from 3-deoxy-D-manno-octulosonate and CTP: step 1/1. The protein operates within bacterial outer membrane biogenesis; lipopolysaccharide biosynthesis. In terms of biological role, activates KDO (a required 8-carbon sugar) for incorporation into bacterial lipopolysaccharide in Gram-negative bacteria. This is 3-deoxy-manno-octulosonate cytidylyltransferase from Klebsiella pneumoniae (strain 342).